The sequence spans 404 residues: Cysteine desulfurase IscS (404 aa).

Residues 75-76 (AT), Asn-155, Gln-183, and 203-205 (SGH) contribute to the pyridoxal 5'-phosphate site. Lys-206 is subject to N6-(pyridoxal phosphate)lysine. Thr-243 contacts pyridoxal 5'-phosphate. The active-site Cysteine persulfide intermediate is the Cys-328. [2Fe-2S] cluster is bound at residue Cys-328.

This sequence belongs to the class-V pyridoxal-phosphate-dependent aminotransferase family. NifS/IscS subfamily. Homodimer. Forms a heterotetramer with IscU, interacts with other sulfur acceptors. It depends on pyridoxal 5'-phosphate as a cofactor.

It is found in the cytoplasm. It catalyses the reaction (sulfur carrier)-H + L-cysteine = (sulfur carrier)-SH + L-alanine. The protein operates within cofactor biosynthesis; iron-sulfur cluster biosynthesis. Its function is as follows. Master enzyme that delivers sulfur to a number of partners involved in Fe-S cluster assembly, tRNA modification or cofactor biosynthesis. Catalyzes the removal of elemental sulfur atoms from cysteine to produce alanine. Functions as a sulfur delivery protein for Fe-S cluster synthesis onto IscU, an Fe-S scaffold assembly protein, as well as other S acceptor proteins. The polypeptide is Cysteine desulfurase IscS (Shewanella denitrificans (strain OS217 / ATCC BAA-1090 / DSM 15013)).